Here is a 162-residue protein sequence, read N- to C-terminus: Cyanate hydratase (162 aa).

Catalysis depends on residues arginine 90, glutamate 93, and serine 116.

Belongs to the cyanase family.

It carries out the reaction cyanate + hydrogencarbonate + 3 H(+) = NH4(+) + 2 CO2. Its function is as follows. Catalyzes the reaction of cyanate with bicarbonate to produce ammonia and carbon dioxide. The protein is Cyanate hydratase of Populus trichocarpa (Western balsam poplar).